Consider the following 422-residue polypeptide: Steroid hormone receptor ERR1 (422 aa).

Positions Met1–Gly67 are disordered. Phosphoserine is present on residues Ser19 and Ser22. Residues Gly58–Gly67 show a composition bias toward gly residues. The segment at residues Lys76–Leu151 is a DNA-binding region (nuclear receptor). 2 consecutive NR C4-type zinc fingers follow at residues Cys79–Cys99 and Cys115–Cys134. 4 positions are modified to N6-acetyllysine; by PCAF/KAT2B: Lys129, Lys138, Lys160, and Lys162. Glycyl lysine isopeptide (Lys-Gly) (interchain with G-Cter in SUMO2) cross-links involve residues Lys189 and Lys402. An NR LBD domain is found at Pro192–Met420.

Belongs to the nuclear hormone receptor family. NR3 subfamily. Binds DNA as a monomer or a homodimer. Interacts (via the AF2 domain) with coactivator PPARGC1A (via the L3 motif); the interaction greatly enhances transcriptional activity of genes involved in energy metabolism. Interacts with PIAS4; the interaction enhances sumoylation. Interacts with MAPK15; promotes re-localization of ESRRA to the cytoplasm through a XPO1-dependent mechanism then inhibits ESRRA transcriptional activity. Phosphorylation on Ser-19 enhances sumoylation on Lys-14 increasing repression of transcriptional activity. In terms of processing, sumoylated with SUMO2. Main site is Lys-14 which is enhanced by phosphorylation on Ser-19, cofactor activation, and by interaction with PIAS4. Sumoylation enhances repression of transcriptional activity, but has no effect on subcellular location nor on DNA binding. Post-translationally, reversibly acetylated. Acetylation by PCAF/KAT2 at Lys-129, Lys-138, Lys-160 and Lys-162 and PCAF/KAT2 decreases transcriptional activity probably by inhibiting DNA-binding activity; deacetylation involves SIRT1 and HDAC8 and increases DNA-binding.

It is found in the nucleus. The protein localises to the cytoplasm. In terms of biological role, binds to an ERR-alpha response element (ERRE) containing a single consensus half-site, 5'-TNAAGGTCA-3'. Can bind to the medium-chain acyl coenzyme A dehydrogenase (MCAD) response element NRRE-1 and may act as an important regulator of MCAD promoter. May function as a modulator of the estrogen signaling pathway in the uterus. Induces the expression of PERM1 in the skeletal muscle. The chain is Steroid hormone receptor ERR1 (ESRRA) from Canis lupus familiaris (Dog).